Reading from the N-terminus, the 564-residue chain is Ferric reductase transmembrane component 1 (564 aa).

Asn-4 carries N-linked (GlcNAc...) asparagine glycosylation. 2 helical membrane passes run 10–30 and 73–93; these read TVIAICLILGILLAFILMFWL and VILTLIAVPVVFAISIPFIGM. N-linked (GlcNAc...) asparagine glycosylation occurs at Asn-111. A helical membrane pass occupies residues 117 to 137; it reads VAARLGFLACGLYVTSYFFSI. The region spanning 121–254 is the Ferric oxidoreductase domain; it reads LGFLACGLYV…VYMKVCVAVY (134 aa). Residues His-157 and His-171 each coordinate heme. Transmembrane regions (helical) follow at residues 160–180 and 193–213; these read LSQYAIMIGAIHGFAYIGLAA and IIGYVILGLMVIMIVSSLPFF. Positions 225 and 239 each coordinate heme. In terms of domain architecture, FAD-binding FR-type spans 255 to 410; it reads VFDRGCRMLR…DGPYGPVSNP (156 aa). Residue Asn-268 is glycosylated (N-linked (GlcNAc...) asparagine). 317-323 is an FAD binding site; sequence HPFTIAS. A glycan (N-linked (GlcNAc...) asparagine) is linked at Asn-360. Phosphoserine occurs at positions 362, 381, and 383. Residues 417–437 form a helical membrane-spanning segment; sequence LFLFAGGVGVSYILPIILDTI. Residue 419–427 coordinates NAD(+); sequence LFAGGVGVS. Asn-501 carries an N-linked (GlcNAc...) asparagine glycan.

It belongs to the ferric reductase (FRE) family. It depends on FAD as a cofactor. Requires heme as cofactor.

The protein resides in the cell membrane. It carries out the reaction 2 a Fe(II)-siderophore + NADP(+) + H(+) = 2 a Fe(III)-siderophore + NADPH. Its function is as follows. Metalloreductase responsible for reducing extracellular iron and copper prior to import. Catalyzes the reductive uptake of Fe(3+)-salts and Fe(3+) bound to catecholate or hydroxamate siderophores. Fe(3+) is reduced to Fe(2+), which then dissociates from the siderophore and can be imported by the high-affinity Fe(2+) transport complex in the plasma membrane. Also participates in Cu(2+) reduction and Cu(+) uptake. This is Ferric reductase transmembrane component 1 (frp1) from Schizosaccharomyces pombe (strain 972 / ATCC 24843) (Fission yeast).